The primary structure comprises 160 residues: MQLTVKALQGRECSLQVSEDELVSTLKHVVSEKLNVPVRQQRLLFKGKALADGKRLSDYSIGPNSKLNLVVKPLEKVLLEESAAACRLTEAPLPRPPAWQLIAKVLARHFSAADASRVLDQLQRDYERSLSRLTLDDIERLASRFLHPEVTEAVEKGFSK.

In terms of domain architecture, Ubiquitin-like spans 1–76; it reads MQLTVKALQG…LNLVVKPLEK (76 aa). Lysine 48 participates in a covalent cross-link: Glycyl lysine isopeptide (Lys-Gly) (interchain with G-Cter in ubiquitin). Residues 99–141 form a required and sufficient for interaction with BAG6 region; sequence WQLIAKVLARHFSAADASRVLDQLQRDYERSLSRLTLDDIERL.

Component of the BAG6/BAT3 complex, at least composed of BAG6, UBL4A and GET4/TRC35. Interacts with BAG6; the interaction is direct and required for UBL4A protein stability. Interacts with USP13; may be indirect via BAG6. In terms of processing, polyubiquitinated. Ubiquitination by AMFR and deubiquitination by USP13 may regulate the interaction between the BAG6/BAT complex and SGTA and therefore may regulate client proteins fate.

Its subcellular location is the cytoplasm. It is found in the cytosol. The protein resides in the nucleus. In terms of biological role, as part of a cytosolic protein quality control complex, the BAG6/BAT3 complex, maintains misfolded and hydrophobic patches-containing proteins in a soluble state and participates in their proper delivery to the endoplasmic reticulum or alternatively can promote their sorting to the proteasome where they undergo degradation. The BAG6/BAT3 complex is involved in the post-translational delivery of tail-anchored/type II transmembrane proteins to the endoplasmic reticulum membrane. Recruited to ribosomes, it interacts with the transmembrane region of newly synthesized tail-anchored proteins and together with SGTA and ASNA1 mediates their delivery to the endoplasmic reticulum. Client proteins that cannot be properly delivered to the endoplasmic reticulum are ubiquitinated and sorted to the proteasome. Similarly, the BAG6/BAT3 complex also functions as a sorting platform for proteins of the secretory pathway that are mislocalized to the cytosol either delivering them to the proteasome for degradation or to the endoplasmic reticulum. The BAG6/BAT3 complex also plays a role in the endoplasmic reticulum-associated degradation (ERAD), a quality control mechanism that eliminates unwanted proteins of the endoplasmic reticulum through their retrotranslocation to the cytosol and their targeting to the proteasome. It maintains these retrotranslocated proteins in an unfolded yet soluble state condition in the cytosol to ensure their proper delivery to the proteasome. In Rhinolophus ferrumequinum (Greater horseshoe bat), this protein is Ubiquitin-like protein 4A (UBL4A).